A 179-amino-acid polypeptide reads, in one-letter code: Warthog protein 3 (179 aa).

Positions Met1–Ala19 are cleaved as a signal peptide. 2 N-linked (GlcNAc...) asparagine glycosylation sites follow: Asn52 and Asn147.

In terms of tissue distribution, expressed in the trinucleate pharyngeal gland cell g1, seam cells and hypodermis.

It is found in the secreted. Its function is as follows. Intercellular signal essential for a variety of patterning events during development. This chain is Warthog protein 3 (wrt-3), found in Caenorhabditis elegans.